Here is a 792-residue protein sequence, read N- to C-terminus: Kinesin-like protein KIFC2 (792 aa).

2 disordered regions span residues 22–45 and 142–184; these read AAAVSDPGDPTQKSGGQPRGRRRP and QGTQ…QEHQ. Polar residues predominate over residues 142–169; it reads QGTQPTCPVQPSTLDGSLSQEESSSQPT. A coiled-coil region spans residues 186–347; that stretch reads LQLEEEQRVW…ARMASLRQGC (162 aa). Residues 409–732 enclose the Kinesin motor domain; that stretch reads NIRVLCRLRP…LKFAERVGQV (324 aa). An ATP-binding site is contributed by 486–493; it reads GQTGTGKT. The tract at residues 734–792 is disordered; the sequence is LGPARRRRAPRSGTPSSLSTDTPLTGTSCTPTPSPGSPPSTSPNSCSGLTLEPPGDPPP. The segment covering 744–764 has biased composition (low complexity); sequence RSGTPSSLSTDTPLTGTSCTP. The segment covering 765–774 has biased composition (pro residues); sequence TPSPGSPPST.

Belongs to the TRAFAC class myosin-kinesin ATPase superfamily. Kinesin family. Present in axons and dendrites of neurons in the central and peripheral nervous systems.

Its subcellular location is the cytoplasm. It localises to the cytoskeleton. Its function is as follows. May play a role in microtubule-dependent retrograde axonal transport. May function as the motor for the transport of multivesicular body (MVB)-like organelles in dendrites. The sequence is that of Kinesin-like protein KIFC2 (Kifc2) from Mus musculus (Mouse).